Here is a 589-residue protein sequence, read N- to C-terminus: Protein FAM117B (589 aa).

Residues 1-310 (MSQRVRRNGS…RDKERQSPFH (310 aa)) are disordered. Ser10 is modified (phosphoserine). Over residues 16-29 (SLGGGAVATAGGPG) the composition is skewed to gly residues. Residues 45 to 56 (QQQQQQHGSPTR) are compositionally biased toward low complexity. The segment covering 57 to 85 (SGGGGGGNNNGGCCGGASGPAGGGGGGGP) has biased composition (gly residues). The residue at position 106 (Ser106) is a Phosphoserine. Low complexity predominate over residues 108–136 (TVATQTGASATSTRGTSPTRSAAPGARGS). Pro residues predominate over residues 137–146 (PPRPPPPPPL). Composition is skewed to low complexity over residues 147-158 (LGTVSSPSSSPT) and 207-220 (PSSSPSSIIRRTSS). Ser210, Ser219, Ser220, and Ser273 each carry phosphoserine. A compositionally biased stretch (basic residues) spans 292-302 (RSKHSSRHHRD). Phosphoserine is present on residues Ser345 and Ser391. 2 disordered regions span residues 370 to 464 (QDIP…NNSY) and 556 to 589 (STNTEQDRVSRGTSTVMPSASLLPPPEPIEEAEG). Positions 384-397 (QRSSSTRSIDTQTP) are enriched in polar residues. Residues 404 to 417 (SNNSSRSQSVSPTS) show a composition bias toward low complexity. Phosphoserine occurs at positions 449 and 457.

The protein is Protein FAM117B (FAM117B) of Homo sapiens (Human).